Consider the following 351-residue polypeptide: Holliday junction branch migration complex subunit RuvB (351 aa).

The interval 1 to 186 (MDEKIETRLI…FGIVQRLEFY (186 aa)) is large ATPase domain (RuvB-L). ATP-binding positions include isoleucine 25, arginine 26, glycine 67, lysine 70, threonine 71, threonine 72, 133–135 (EDF), arginine 176, tyrosine 186, and arginine 223. Threonine 71 provides a ligand contact to Mg(2+). Residues 187-257 (RIPDLIHIVK…IAKEALDLLN (71 aa)) form a small ATPAse domain (RuvB-S) region. The head domain (RuvB-H) stretch occupies residues 260-351 (IRGLDVMDRK…ENFDLLGKVE (92 aa)). Arginine 296, arginine 315, and arginine 320 together coordinate DNA.

The protein belongs to the RuvB family. Homohexamer. Forms an RuvA(8)-RuvB(12)-Holliday junction (HJ) complex. HJ DNA is sandwiched between 2 RuvA tetramers; dsDNA enters through RuvA and exits via RuvB. An RuvB hexamer assembles on each DNA strand where it exits the tetramer. Each RuvB hexamer is contacted by two RuvA subunits (via domain III) on 2 adjacent RuvB subunits; this complex drives branch migration. In the full resolvosome a probable DNA-RuvA(4)-RuvB(12)-RuvC(2) complex forms which resolves the HJ.

The protein resides in the cytoplasm. The enzyme catalyses ATP + H2O = ADP + phosphate + H(+). Functionally, the RuvA-RuvB-RuvC complex processes Holliday junction (HJ) DNA during genetic recombination and DNA repair, while the RuvA-RuvB complex plays an important role in the rescue of blocked DNA replication forks via replication fork reversal (RFR). RuvA specifically binds to HJ cruciform DNA, conferring on it an open structure. The RuvB hexamer acts as an ATP-dependent pump, pulling dsDNA into and through the RuvAB complex. RuvB forms 2 homohexamers on either side of HJ DNA bound by 1 or 2 RuvA tetramers; 4 subunits per hexamer contact DNA at a time. Coordinated motions by a converter formed by DNA-disengaged RuvB subunits stimulates ATP hydrolysis and nucleotide exchange. Immobilization of the converter enables RuvB to convert the ATP-contained energy into a lever motion, pulling 2 nucleotides of DNA out of the RuvA tetramer per ATP hydrolyzed, thus driving DNA branch migration. The RuvB motors rotate together with the DNA substrate, which together with the progressing nucleotide cycle form the mechanistic basis for DNA recombination by continuous HJ branch migration. Branch migration allows RuvC to scan DNA until it finds its consensus sequence, where it cleaves and resolves cruciform DNA. This is Holliday junction branch migration complex subunit RuvB from Coxiella burnetii (strain CbuG_Q212) (Coxiella burnetii (strain Q212)).